The primary structure comprises 510 residues: MIWHVQNENLILDSTRIFMKAFHLPLFDGSFIFPEGILIFGLILLLMIDSTSDQTDIPWFYFISSISLVMSITALLFRWREEPRILFSGNFQTNNFNEIFQFLILLCSTLCIPLSVEYIECTEMAITEFLLFVLTATLGGMFLCGANDLITIFVAPECFSLCSYLLSGYTKKDVRSNEATMKYLLMGGASSSILVHGFSWLYGSSGGEIELQEIVNGLINTQMYNSPGISIALIFITVGIGFKLSPAPSHQWTPDVYEGSPTPVVAFLSVTSKVAASASATRIFDIPFYFSSNEWHPLLEILAILSMILGNLIAITQTSMKRMLAYSSIGQIGYVIIGIIVGDANGGYASMITYMLFYISMNLGTFACIVLFGLRTGTDNIRDYAGLYTKDPFLALSLALCLLSLGGLPPLAGFFGKLHLFWCGWQAGLYFLVSIGLFTSVVSIYYYLKIIKLLMTGRKQEITPHVRNYRRSPLRSNNSIELSMIVCVIASTIPGISMNPIIAIAQDTLF.

Helical transmembrane passes span 26–46 (LFDGSFIFPEGILIFGLILLL), 57–77 (IPWFYFISSISLVMSITALLF), 99–119 (IFQFLILLCSTLCIPLSVEYI), 124–144 (MAITEFLLFVLTATLGGMFLC), 149–169 (LITIFVAPECFSLCSYLLSGY), 183–203 (YLLMGGASSSILVHGFSWLYG), 227–247 (PGISIALIFITVGIGFKLSPA), 295–315 (WHPLLEILAILSMILGNLIAI), 323–342 (MLAYSSIGQIGYVIIGIIVG), 354–374 (YMLFYISMNLGTFACIVLFGL), 395–415 (ALSLALCLLSLGGLPPLAGFF), 418–438 (LHLFWCGWQAGLYFLVSIGLF), and 484–504 (MIVCVIASTIPGISMNPIIAI).

The protein belongs to the complex I subunit 2 family. As to quaternary structure, NDH is composed of at least 16 different subunits, 5 of which are encoded in the nucleus.

The protein localises to the plastid. Its subcellular location is the chloroplast thylakoid membrane. The enzyme catalyses a plastoquinone + NADH + (n+1) H(+)(in) = a plastoquinol + NAD(+) + n H(+)(out). It carries out the reaction a plastoquinone + NADPH + (n+1) H(+)(in) = a plastoquinol + NADP(+) + n H(+)(out). Its function is as follows. NDH shuttles electrons from NAD(P)H:plastoquinone, via FMN and iron-sulfur (Fe-S) centers, to quinones in the photosynthetic chain and possibly in a chloroplast respiratory chain. The immediate electron acceptor for the enzyme in this species is believed to be plastoquinone. Couples the redox reaction to proton translocation, and thus conserves the redox energy in a proton gradient. This Oenothera biennis (German evening primrose) protein is NAD(P)H-quinone oxidoreductase subunit 2 A, chloroplastic.